A 729-amino-acid polypeptide reads, in one-letter code: DNA topoisomerase 3 (729 aa).

A Toprim domain is found at 3-136 (KSVVIAEKPS…IKRLWISSVT (134 aa)). Residues glutamate 9 and aspartate 105 each coordinate Mg(2+). The Topo IA-type catalytic domain occupies 153 to 594 (YDNLYASAVA…EMKNYTKEIV (442 aa)). The interval 187–192 (NCGRVQ) is interaction with DNA. The active-site O-(5'-phospho-DNA)-tyrosine intermediate is tyrosine 310. Over residues 686–713 (ERRKKESGNKADKRDVQKYMKQQKKEEE) the composition is skewed to basic and acidic residues. The tract at residues 686-718 (ERRKKESGNKADKRDVQKYMKQQKKEEEPLNNP) is disordered.

This sequence belongs to the type IA topoisomerase family. Requires Mg(2+) as cofactor.

It catalyses the reaction ATP-independent breakage of single-stranded DNA, followed by passage and rejoining.. Releases the supercoiling and torsional tension of DNA, which is introduced during the DNA replication and transcription, by transiently cleaving and rejoining one strand of the DNA duplex. Introduces a single-strand break via transesterification at a target site in duplex DNA. The scissile phosphodiester is attacked by the catalytic tyrosine of the enzyme, resulting in the formation of a DNA-(5'-phosphotyrosyl)-enzyme intermediate and the expulsion of a 3'-OH DNA strand. The free DNA strand then undergoes passage around the unbroken strand, thus removing DNA supercoils. Finally, in the religation step, the DNA 3'-OH attacks the covalent intermediate to expel the active-site tyrosine and restore the DNA phosphodiester backbone. The chain is DNA topoisomerase 3 from Bacillus thuringiensis subsp. konkukian (strain 97-27).